Consider the following 217-residue polypeptide: Probable GTP-binding protein EngB (217 aa).

The 185-residue stretch at 29–213 (GPLEVAFAGR…RQAIAETVGI (185 aa)) folds into the EngB-type G domain. GTP contacts are provided by residues 37 to 44 (GRSNVGKS), 64 to 68 (GRTQE), 91 to 94 (DMPG), 158 to 161 (TKTD), and 192 to 194 (TSS). Residues Ser-44 and Thr-66 each coordinate Mg(2+).

It belongs to the TRAFAC class TrmE-Era-EngA-EngB-Septin-like GTPase superfamily. EngB GTPase family. The cofactor is Mg(2+).

In terms of biological role, necessary for normal cell division and for the maintenance of normal septation. The chain is Probable GTP-binding protein EngB from Rhizobium johnstonii (strain DSM 114642 / LMG 32736 / 3841) (Rhizobium leguminosarum bv. viciae).